The chain runs to 61 residues: Defensin-like peptide TXKs2 (61 aa).

A signal peptide spans 1-19 (MTYAILIIVSLLLISDRIS). A propeptide spanning residues 20–22 (NVV) is cleaved from the precursor. Cystine bridges form between Cys26–Cys47, Cys33–Cys56, and Cys37–Cys58.

It belongs to the invertebrate defensin family. As to expression, expressed by the venom gland.

The protein localises to the secreted. Antibacterial protein. In Olivierus martensii (Manchurian scorpion), this protein is Defensin-like peptide TXKs2.